The chain runs to 993 residues: UPF0182 protein ROP_64500 (993 aa).

The next 7 helical transmembrane spans lie at valine 18–serine 38, leucine 63–leucine 83, leucine 114–serine 134, tryptophan 174–glycine 194, valine 211–aspartate 231, lysine 260–leucine 280, and methionine 288–valine 308. Residues threonine 904 to valine 948 form a disordered region. Low complexity predominate over residues alanine 908 to proline 926. A compositionally biased stretch (pro residues) spans proline 933–proline 942.

The protein belongs to the UPF0182 family.

Its subcellular location is the cell membrane. This Rhodococcus opacus (strain B4) protein is UPF0182 protein ROP_64500.